The chain runs to 601 residues: Cdc42-interacting protein 4 (601 aa).

The tract at residues M1–F117 is required for podosome formation and interaction with AKAP9 and microtubules. Residues M1 to F117 are required for translocation to the plasma membrane in response to insulin. Residues M1 to D264 form the F-BAR domain. Residues F67–V259 are a coiled coil. Disordered stretches follow at residues G280–P358, D390–Q420, and R479–G543. Over residues Q289–T302 the composition is skewed to polar residues. Positions R293–E537 are interaction with CDC42. An interaction with PDE6G region spans residues R293–N601. Residues S296, S298, and S299 each carry the phosphoserine modification. Over residues G314–P329 the composition is skewed to basic residues. Position 335 is a phosphoserine (S335). Low complexity predominate over residues P336–P346. S351 is subject to Phosphoserine. Positions T388–D481 form a coiled coil. An REM-1 domain is found at H393 to E470. Residues L407 to Q420 show a composition bias toward basic and acidic residues. The required for interaction with FASLG and localization to lysosomes stretch occupies residues A471–N601. S482 is subject to Phosphoserine. The segment at A487–P541 is interaction with DNM2 and WASL. The segment covering P497–S506 has biased composition (low complexity). A compositionally biased stretch (acidic residues) spans E529–P538. An interaction with DNM1 and WASL region spans residues E529–N601. The tract at residues P538–N601 is required for podosome formation. An SH3 domain is found at S540 to N601. Positions H544–N601 are interaction with WAS. The interaction with ARHGAP17, DAAM1, DIAPH1 and DIAPH2 stretch occupies residues V546–N601.

Belongs to the FNBP1 family. As to quaternary structure, interacts specifically with GTP-bound RHOQ. Interacts with DNM2 and PDE6G. Homodimerizes, the dimers can polymerize end-to-end to form filamentous structures. Interacts specifically with GTP-bound CDC42. Interacts with AKAP9, ARHGAP17, DAAM1, DIAPH1, DIAPH2, DNM1, FASLG/FASL, GAPVD1, LYN, microtubules, SRC, WAS/WASP and WASL/N-WASP. Interacts with the ligand binding domain of the thyroid receptor (TR) in the presence of thyroid hormone. May interact with CTNNB1 and HD/HTT. Tyrosine phosphorylated. Also phosphorylated by PKA. Expressed in brain, colon, heart, kidney, liver, lung, megakaryocyte, ovary, pancreas, peripheral blood lymphocytes, placenta, prostate, skeletal muscle, small intestine, spleen, testis, thymus and trachea.

The protein localises to the cytoplasm. The protein resides in the cytoskeleton. It is found in the cell cortex. It localises to the lysosome. Its subcellular location is the golgi apparatus. The protein localises to the cell membrane. The protein resides in the cell projection. It is found in the phagocytic cup. It localises to the perinuclear region. In terms of biological role, required for translocation of GLUT4 to the plasma membrane in response to insulin signaling. Required to coordinate membrane tubulation with reorganization of the actin cytoskeleton during endocytosis. Binds to lipids such as phosphatidylinositol 4,5-bisphosphate and phosphatidylserine and promotes membrane invagination and the formation of tubules. Also promotes CDC42-induced actin polymerization by recruiting WASL/N-WASP which in turn activates the Arp2/3 complex. Actin polymerization may promote the fission of membrane tubules to form endocytic vesicles. Required for the formation of podosomes, actin-rich adhesion structures specific to monocyte-derived cells. May be required for the lysosomal retention of FASLG/FASL. The sequence is that of Cdc42-interacting protein 4 (TRIP10) from Homo sapiens (Human).